The sequence spans 423 residues: Ornithine cyclodeaminase (423 aa).

NAD(+) is bound by residues Asn-241, Ala-242, Asp-320, Thr-352, Met-353, Leu-354, His-355, Asp-373, Asp-396, and Val-397.

It belongs to the AgrE/ArgZ ornithine cyclodeaminase family. NAD(+) serves as cofactor.

The catalysed reaction is L-ornithine = L-proline + NH4(+). In terms of biological role, catalyzes the conversion of ornithine to proline, with the release of ammonia. The polypeptide is Ornithine cyclodeaminase (Methanocaldococcus jannaschii (strain ATCC 43067 / DSM 2661 / JAL-1 / JCM 10045 / NBRC 100440) (Methanococcus jannaschii)).